A 129-amino-acid chain; its full sequence is Large ribosomal subunit protein bL21 (129 aa).

The protein belongs to the bacterial ribosomal protein bL21 family. Part of the 50S ribosomal subunit. Contacts protein L20.

In terms of biological role, this protein binds to 23S rRNA in the presence of protein L20. The polypeptide is Large ribosomal subunit protein bL21 (Microcystis aeruginosa (strain NIES-843 / IAM M-2473)).